A 248-amino-acid polypeptide reads, in one-letter code: Phosphatidylglycerol--prolipoprotein diacylglyceryl transferase (248 aa).

The next 3 membrane-spanning stretches (helical) occupy residues F6–L26, N47–F67, and G84–T104. R130 contributes to the a 1,2-diacyl-sn-glycero-3-phospho-(1'-sn-glycerol) binding site. The next 2 membrane-spanning stretches (helical) occupy residues G186–L206 and M218–S238.

The protein belongs to the Lgt family.

The protein resides in the cell membrane. The enzyme catalyses L-cysteinyl-[prolipoprotein] + a 1,2-diacyl-sn-glycero-3-phospho-(1'-sn-glycerol) = an S-1,2-diacyl-sn-glyceryl-L-cysteinyl-[prolipoprotein] + sn-glycerol 1-phosphate + H(+). It functions in the pathway protein modification; lipoprotein biosynthesis (diacylglyceryl transfer). Catalyzes the transfer of the diacylglyceryl group from phosphatidylglycerol to the sulfhydryl group of the N-terminal cysteine of a prolipoprotein, the first step in the formation of mature lipoproteins. The sequence is that of Phosphatidylglycerol--prolipoprotein diacylglyceryl transferase from Clostridioides difficile (strain 630) (Peptoclostridium difficile).